We begin with the raw amino-acid sequence, 308 residues long: Elongation factor Ts (308 aa).

Positions 80–83 (TDFV) are involved in Mg(2+) ion dislocation from EF-Tu.

This sequence belongs to the EF-Ts family.

The protein localises to the cytoplasm. Functionally, associates with the EF-Tu.GDP complex and induces the exchange of GDP to GTP. It remains bound to the aminoacyl-tRNA.EF-Tu.GTP complex up to the GTP hydrolysis stage on the ribosome. The sequence is that of Elongation factor Ts from Rhodopseudomonas palustris (strain BisB5).